A 491-amino-acid polypeptide reads, in one-letter code: G2/mitotic-specific cyclin-2 (491 aa).

The residue at position 2 (Ser2) is an N-acetylserine. 2 disordered regions span residues 59 to 107 and 164 to 184; these read EGSR…DPSS and HPAR…SGKK. Over residues 67 to 77 the composition is skewed to polar residues; that stretch reads TRESVSRSTAA.

The protein belongs to the cyclin family. Cyclin AB subfamily. As to quaternary structure, interacts with NAP1.

Essential for the control of the cell cycle at the G2/M (mitosis) transition. Interacts with the CDC2 protein kinase to form MPF. G2/M cyclins accumulate steadily during G2 and are abruptly destroyed at mitosis. The polypeptide is G2/mitotic-specific cyclin-2 (CLB2) (Saccharomyces cerevisiae (strain ATCC 204508 / S288c) (Baker's yeast)).